Here is a 123-residue protein sequence, read N- to C-terminus: Large ribosomal subunit protein bL12 (123 aa).

Belongs to the bacterial ribosomal protein bL12 family. As to quaternary structure, homodimer. Part of the ribosomal stalk of the 50S ribosomal subunit. Forms a multimeric L10(L12)X complex, where L10 forms an elongated spine to which 2 to 4 L12 dimers bind in a sequential fashion. Binds GTP-bound translation factors.

Its function is as follows. Forms part of the ribosomal stalk which helps the ribosome interact with GTP-bound translation factors. Is thus essential for accurate translation. The chain is Large ribosomal subunit protein bL12 from Borrelia duttonii (strain Ly).